The sequence spans 180 residues: Large ribosomal subunit protein uL5 (180 aa).

It belongs to the universal ribosomal protein uL5 family. Part of the 50S ribosomal subunit; part of the 5S rRNA/L5/L18/L25 subcomplex. Contacts the 5S rRNA and the P site tRNA. Forms a bridge to the 30S subunit in the 70S ribosome.

Its function is as follows. This is one of the proteins that bind and probably mediate the attachment of the 5S RNA into the large ribosomal subunit, where it forms part of the central protuberance. In the 70S ribosome it contacts protein S13 of the 30S subunit (bridge B1b), connecting the 2 subunits; this bridge is implicated in subunit movement. Contacts the P site tRNA; the 5S rRNA and some of its associated proteins might help stabilize positioning of ribosome-bound tRNAs. This is Large ribosomal subunit protein uL5 from Clostridium acetobutylicum (strain ATCC 824 / DSM 792 / JCM 1419 / IAM 19013 / LMG 5710 / NBRC 13948 / NRRL B-527 / VKM B-1787 / 2291 / W).